A 353-amino-acid polypeptide reads, in one-letter code: Glucose import ATP-binding protein GlcV (353 aa).

Residues 4-241 (IIVKNVSKVF…PVSIQVASLI (238 aa)) form the ABC transporter domain. ATP-binding positions include 40–46 (SGAGKTT), Gln89, and Glu166.

The protein belongs to the ABC transporter superfamily. The complex is composed of two ATP-binding proteins (GlcV), two transmembrane proteins (GlcT and GlcU) and a solute-binding protein (GlcS). Forms transient head-to-tail homodimers in the presence of ATP-Mg(2+).

It localises to the cell membrane. The enzyme catalyses D-glucose(out) + ATP + H2O = D-glucose(in) + ADP + phosphate + H(+). Functionally, part of the ABC transporter complex GlcSTUV involved in glucose uptake. Responsible for energy coupling to the transport system. In vitro, as a free subunit, exhibits a constitutive ATPase activity. In Saccharolobus solfataricus (strain ATCC 35092 / DSM 1617 / JCM 11322 / P2) (Sulfolobus solfataricus), this protein is Glucose import ATP-binding protein GlcV.